Reading from the N-terminus, the 1376-residue chain is YLP motif-containing protein 1 (1376 aa).

2 disordered regions span residues 1 to 335 (MYPN…PEED) and 511 to 1058 (STIP…PPGR). Residues 14–27 (YPPPPVPPPPPPVA) are compositionally biased toward pro residues. Low complexity-rich tracts occupy residues 31–50 (ASPGPGYSSSTAPAAPSSSG) and 59–80 (LAQLQQLQQMHQKQMQCVLQPH). Composition is skewed to pro residues over residues 81–93 (HLPPPPLPPPPVM), 102–114 (QPPPPPMPPPPGP), 148–158 (PESPPVPPGSY), 166–176 (MPPPQPPPSYY), and 184–204 (YLPPAQPSPSKPQLPPPPPSI). Polar residues-rich tracts occupy residues 207–216 (GNKTTIQQEP) and 238–260 (STMTPQEQQQYWYRQHLLSLQQR). Over residues 261–271 (TKVHLPGHKKG) the composition is skewed to basic residues. The span at 277-286 (DVPEPIKEEA) shows a compositional bias: basic and acidic residues. Pro residues-rich tracts occupy residues 303 to 320 (PPLPPPNEEMPPPLPPEE), 511 to 537 (STIPPPGMPPPVMPPSLPTSVPPPGMP), 545 to 594 (LPPP…PQGM), and 632 to 641 (PPSPYHPPPQ). Polar residues predominate over residues 642 to 671 (SEQGNSKPLNKVFSSEQGLGESSSALSQSV). Lys675 carries the post-translational modification N6-methyllysine. Over residues 698–714 (RGPREQKEQLQKLKDFG) the composition is skewed to basic and acidic residues. 3 stretches are compositionally biased toward pro residues: residues 738–753 (MYPPPGSYRPPPPMGK), 773–796 (TRPPVPIPPPPPPPPPPPPPPPVI), and 840–870 (PVLPPPPVHPSIPPPGPMPMGMPPMSKPPPV). A Glycyl lysine isopeptide (Lys-Gly) (interchain with G-Cter in SUMO2) cross-link involves residue Lys886. 4 stretches are compositionally biased toward basic and acidic residues: residues 896 to 930 (ITLRPDPLPERSAFDADHAGQRDRYDRDRDREPYF), 937 to 1004 (TDHR…DRPP), 1013 to 1023 (GERRTYPEERM), and 1039 to 1058 (RVEKKPESKNVDDILKPPGR). Lys943 participates in a covalent cross-link: Glycyl lysine isopeptide (Lys-Gly) (interchain with G-Cter in SUMO2). An involved in interaction with PPP1CA region spans residues 1326–1333 (KKRVRWAD).

As to quaternary structure, interacts with PPP1CA and NCOA5. Forms a complex with ILF2, ILF3, KHDRBS1, RBMX, NCOA5 and PPP1CA. In terms of tissue distribution, high level expression seen in the brain, adipose tissue, heart and kidney, with a low level expression in muscle, spleen and lung (at protein level).

The protein localises to the nucleus. It is found in the nucleus speckle. In terms of biological role, plays a role in the reduction of telomerase activity during differentiation of embryonic stem cells by binding to the core promoter of TERT and controlling its down-regulation. The sequence is that of YLP motif-containing protein 1 (Ylpm1) from Rattus norvegicus (Rat).